The chain runs to 275 residues: Nitrogenase iron protein 1 (275 aa).

9–16 is an ATP binding site; it reads GKGGIGKS. Cys-97 is a [4Fe-4S] cluster binding site. Arg-100 carries the post-translational modification ADP-ribosylarginine; by dinitrogenase reductase ADP-ribosyltransferase. Cys-132 provides a ligand contact to [4Fe-4S] cluster.

Belongs to the NifH/BchL/ChlL family. In terms of assembly, homodimer. The cofactor is [4Fe-4S] cluster. In terms of processing, the reversible ADP-ribosylation of Arg-100 inactivates the nitrogenase reductase and regulates nitrogenase activity.

It carries out the reaction N2 + 8 reduced [2Fe-2S]-[ferredoxin] + 16 ATP + 16 H2O = H2 + 8 oxidized [2Fe-2S]-[ferredoxin] + 2 NH4(+) + 16 ADP + 16 phosphate + 6 H(+). Functionally, the key enzymatic reactions in nitrogen fixation are catalyzed by the nitrogenase complex, which has 2 components: the iron protein and the molybdenum-iron protein. The sequence is that of Nitrogenase iron protein 1 (nifH1) from Methanosarcina barkeri.